Reading from the N-terminus, the 164-residue chain is Lipoprotein signal peptidase (164 aa).

4 helical membrane passes run 2–22 (MSLL…AIVL), 40–60 (VVIT…AFSF), 70–90 (WLFS…MAKA), and 99–119 (LAYS…VVYG). Residues Asp123 and Asp142 contribute to the active site. Residues 138 to 158 (FNVADMAISCGAVFIILDGFI) traverse the membrane as a helical segment.

Belongs to the peptidase A8 family.

The protein localises to the cell inner membrane. It carries out the reaction Release of signal peptides from bacterial membrane prolipoproteins. Hydrolyzes -Xaa-Yaa-Zaa-|-(S,diacylglyceryl)Cys-, in which Xaa is hydrophobic (preferably Leu), and Yaa (Ala or Ser) and Zaa (Gly or Ala) have small, neutral side chains.. It functions in the pathway protein modification; lipoprotein biosynthesis (signal peptide cleavage). Functionally, this protein specifically catalyzes the removal of signal peptides from prolipoproteins. This chain is Lipoprotein signal peptidase, found in Tolumonas auensis (strain DSM 9187 / NBRC 110442 / TA 4).